The sequence spans 178 residues: GTP-dependent dephospho-CoA kinase (178 aa).

The GTP site is built by Asp-43, Ile-44, Val-45, Asp-62, Lys-64, and Glu-120.

The protein belongs to the GTP-dependent DPCK family.

It carries out the reaction 3'-dephospho-CoA + GTP = GDP + CoA + H(+). It participates in cofactor biosynthesis; coenzyme A biosynthesis. Its function is as follows. Catalyzes the GTP-dependent phosphorylation of the 3'-hydroxyl group of dephosphocoenzyme A to form coenzyme A (CoA). The chain is GTP-dependent dephospho-CoA kinase from Natronomonas pharaonis (strain ATCC 35678 / DSM 2160 / CIP 103997 / JCM 8858 / NBRC 14720 / NCIMB 2260 / Gabara) (Halobacterium pharaonis).